A 580-amino-acid chain; its full sequence is Arginine--tRNA ligase (580 aa).

Residues 131–141 carry the 'HIGH' region motif; it reads ANPTGPLHVGH.

This sequence belongs to the class-I aminoacyl-tRNA synthetase family. Monomer.

The protein resides in the cytoplasm. The catalysed reaction is tRNA(Arg) + L-arginine + ATP = L-arginyl-tRNA(Arg) + AMP + diphosphate. In Roseobacter denitrificans (strain ATCC 33942 / OCh 114) (Erythrobacter sp. (strain OCh 114)), this protein is Arginine--tRNA ligase.